We begin with the raw amino-acid sequence, 166 residues long: Large ribosomal subunit protein mL49 (166 aa).

The protein belongs to the mitochondrion-specific ribosomal protein mL49 family. Component of the mitochondrial ribosome large subunit (39S) which comprises a 16S rRNA and about 50 distinct proteins. Interacts with OXA1L.

Its subcellular location is the mitochondrion. This chain is Large ribosomal subunit protein mL49 (MRPL49), found in Bos taurus (Bovine).